A 192-amino-acid chain; its full sequence is Thymidylate kinase (192 aa).

Position 7–14 (Gly-7–Ser-14) interacts with ATP.

This sequence belongs to the thymidylate kinase family.

The catalysed reaction is dTMP + ATP = dTDP + ADP. Phosphorylation of dTMP to form dTDP in both de novo and salvage pathways of dTTP synthesis. The protein is Thymidylate kinase of Campylobacter jejuni subsp. jejuni serotype O:6 (strain 81116 / NCTC 11828).